The sequence spans 120 residues: 5-hydroxyisourate hydrolase 2 (120 aa).

The substrate site is built by His10, Arg48, and Tyr117.

Belongs to the transthyretin family. 5-hydroxyisourate hydrolase subfamily. As to quaternary structure, homotetramer.

The catalysed reaction is 5-hydroxyisourate + H2O = 5-hydroxy-2-oxo-4-ureido-2,5-dihydro-1H-imidazole-5-carboxylate + H(+). Catalyzes the hydrolysis of 5-hydroxyisourate (HIU) to 2-oxo-4-hydroxy-4-carboxy-5-ureidoimidazoline (OHCU). The polypeptide is 5-hydroxyisourate hydrolase 2 (Rhizobium meliloti (strain 1021) (Ensifer meliloti)).